Consider the following 177-residue polypeptide: Large ribosomal subunit protein uL6 (177 aa).

A compositionally biased stretch (basic and acidic residues) spans 152–171; that stretch reads RPPEPYKGKGVRYDDEEVRR. The interval 152-177 is disordered; it reads RPPEPYKGKGVRYDDEEVRRKEAKKK.

It belongs to the universal ribosomal protein uL6 family. Part of the 50S ribosomal subunit.

In terms of biological role, this protein binds to the 23S rRNA, and is important in its secondary structure. It is located near the subunit interface in the base of the L7/L12 stalk, and near the tRNA binding site of the peptidyltransferase center. The chain is Large ribosomal subunit protein uL6 from Shewanella oneidensis (strain ATCC 700550 / JCM 31522 / CIP 106686 / LMG 19005 / NCIMB 14063 / MR-1).